The chain runs to 179 residues: MTRLQEKYSKEVIPAMIEKFGYKNVMEIPKLEKIVINMGVGEAKENQKVLESAVSDLSLIAGQKPILTRAKKSVANFKIRENMALGCKVTLRKAKMYEFADKLMSIALPRVRDFRGVSAKAFDGRGNYSLGIKEQLIFPEIEYDKIDKVRGMDIIFVTTANTDEEARELLRFLGMPFAQ.

Belongs to the universal ribosomal protein uL5 family. In terms of assembly, part of the 50S ribosomal subunit; part of the 5S rRNA/L5/L18/L25 subcomplex. Contacts the 5S rRNA and the P site tRNA. Forms a bridge to the 30S subunit in the 70S ribosome.

This is one of the proteins that bind and probably mediate the attachment of the 5S RNA into the large ribosomal subunit, where it forms part of the central protuberance. In the 70S ribosome it contacts protein S13 of the 30S subunit (bridge B1b), connecting the 2 subunits; this bridge is implicated in subunit movement. Contacts the P site tRNA; the 5S rRNA and some of its associated proteins might help stabilize positioning of ribosome-bound tRNAs. The polypeptide is Large ribosomal subunit protein uL5 (Clostridium botulinum (strain Alaska E43 / Type E3)).